The primary structure comprises 182 residues: MEINKFICSQGPKKNSCEDFWRMVLEQESCIIVSLTETDDEDQVCYEYWVKEEDYELAFGRYVVKTLEIIEESSFTRTRLRLTDVSSDTSREIHHFWYPHWSDYGNPTNPAEILNLISKVNQKRKEMKKTADSQPGPIVVHCSAGIGRTGTFCTIDNALSQLRKEQTVCLPQTVLKIQKSKI.

One can recognise a Tyrosine-protein phosphatase domain in the interval 1–182; sequence MEINKFICSQ…TVLKIQKSKI (182 aa). Cysteine 142 acts as the Phosphocysteine intermediate in catalysis.

This sequence belongs to the protein-tyrosine phosphatase family.

It carries out the reaction O-phospho-L-tyrosyl-[protein] + H2O = L-tyrosyl-[protein] + phosphate. The sequence is that of Probable tyrosine phosphatase protein H4 (H5) from Microplitis demolitor (Parasitoid wasp).